Consider the following 350-residue polypeptide: Ion-translocating oxidoreductase complex subunit D (350 aa).

The next 4 helical transmembrane spans lie at 20-40 (VMLW…LFFG), 42-62 (GNLI…AAFL), 89-109 (LPQF…IVVA), and 120-140 (PFNP…VAMT). Residue T178 is modified to FMN phosphoryl threonine. 5 helical membrane-spanning segments follow: residues 204–224 (LIAR…VLLI), 228–248 (IITW…SLAF), 255–275 (YAPL…FFIA), 282–302 (ATSH…VYLI), and 306–326 (GNYP…VPFI).

It belongs to the NqrB/RnfD family. The complex is composed of six subunits: RnfA, RnfB, RnfC, RnfD, RnfE and RnfG. The cofactor is FMN.

The protein localises to the cell inner membrane. Its function is as follows. Part of a membrane-bound complex that couples electron transfer with translocation of ions across the membrane. This Marinobacter nauticus (strain ATCC 700491 / DSM 11845 / VT8) (Marinobacter aquaeolei) protein is Ion-translocating oxidoreductase complex subunit D.